The chain runs to 95 residues: Membrane protein insertion and folding monitor (95 aa).

The chain crosses the membrane as a helical span at residues 12-32 (LFLVDFFTIILPALTAIGIAF). Positions 86–89 (DEED) are crucial for elongation arrest.

It is found in the cell membrane. Its function is as follows. Sensor protein that up-regulates translation of the secondary membrane protein insertase (MisCB/YqjG) when activity of the primary membrane protein insertase (MisCA/SpoIIIJ) is limited. Acts as a ribosome-nascent chain complex. When the primary membrane protein insertase activity or level is reduced, the membrane insertion of MifM is impaired, which induces arrest of MifM translation and unfolding of the mRNA hairpin. Unfolding leads to translation of the downstream gene, which encodes the secondary membrane protein insertase MisCB/YqjG. Translation arrest of MifM is mediated by interaction of its C-terminal domain with the ribosomal polypeptide exit tunnel. Undergoes multisite stalling, which may allow a sufficient duration of ribosomal stalling and consequently sufficient levels of MisCB/YqjG. In Bacillus subtilis (strain 168), this protein is Membrane protein insertion and folding monitor (mifM).